We begin with the raw amino-acid sequence, 397 residues long: Lipoyl synthase 2, chloroplastic (397 aa).

Residues 1 to 35 constitute a chloroplast transit peptide; sequence MIEQSLSKPSFSLSIPIPKAPKSKSSFFCSYSKIR. The segment at 49–85 is disordered; sequence AKHPQNSTTINNGSSSSASVDLKNNEKGPYPYPGGGK. A compositionally biased stretch (low complexity) spans 54-67; sequence NSTTINNGSSSSAS. Cys-128, Cys-133, Cys-139, Cys-159, Cys-163, Cys-166, and Ser-374 together coordinate [4Fe-4S] cluster. Residues 142 to 363 enclose the Radical SAM core domain; it reads GGGDGIATAT…KEYGESIGFR (222 aa).

The protein belongs to the radical SAM superfamily. Lipoyl synthase family. It depends on [4Fe-4S] cluster as a cofactor.

Its subcellular location is the plastid. It is found in the chloroplast. It catalyses the reaction [[Fe-S] cluster scaffold protein carrying a second [4Fe-4S](2+) cluster] + N(6)-octanoyl-L-lysyl-[protein] + 2 oxidized [2Fe-2S]-[ferredoxin] + 2 S-adenosyl-L-methionine + 4 H(+) = [[Fe-S] cluster scaffold protein] + N(6)-[(R)-dihydrolipoyl]-L-lysyl-[protein] + 4 Fe(3+) + 2 hydrogen sulfide + 2 5'-deoxyadenosine + 2 L-methionine + 2 reduced [2Fe-2S]-[ferredoxin]. Its pathway is protein modification; protein lipoylation via endogenous pathway; protein N(6)-(lipoyl)lysine from octanoyl-[acyl-carrier-protein]: step 2/2. Functionally, catalyzes the radical-mediated insertion of two sulfur atoms into the C-6 and C-8 positions of the octanoyl moiety bound to the lipoyl domains of lipoate-dependent enzymes, thereby converting the octanoylated domains into lipoylated derivatives. The protein is Lipoyl synthase 2, chloroplastic of Populus trichocarpa (Western balsam poplar).